Consider the following 930-residue polypeptide: Endoplasmic reticulum aminopeptidase 1 (930 aa).

The Cytoplasmic segment spans residues 1–2; that stretch reads MP. A helical; Signal-anchor for type II membrane protein membrane pass occupies residues 3 to 23; sequence SLLSLVLTFLAVSSPSCCQNS. Over 24-930 the chain is Lumenal; sequence DTASPKASNG…WLQKERQELL (907 aa). Asparagine 59 and asparagine 143 each carry an N-linked (GlcNAc...) asparagine glycan. Substrate is bound by residues glutamate 172 and 306 to 310; that span reads GAMEN. Histidine 342 serves as a coordination point for Zn(2+). Residue glutamate 343 is the Proton acceptor of the active site. The Zn(2+) site is built by histidine 346 and glutamate 365. Residues cysteine 393 and cysteine 432 are joined by a disulfide bond. N-linked (GlcNAc...) asparagine glycosylation is found at asparagine 403 and asparagine 655. An intrachain disulfide couples cysteine 725 to cysteine 732. N-linked (GlcNAc...) asparagine glycans are attached at residues asparagine 749 and asparagine 890.

The protein belongs to the peptidase M1 family. Monomer. May also exist as a heterodimer; with ERAP2. Interacts with RBMX. The cofactor is Zn(2+). N-glycosylated. Ubiquitous.

Its subcellular location is the endoplasmic reticulum membrane. Functionally, aminopeptidase that plays a central role in peptide trimming, a step required for the generation of most HLA class I-binding peptides. Peptide trimming is essential to customize longer precursor peptides to fit them to the correct length required for presentation on MHC class I molecules. Strongly prefers substrates 9-16 residues long. Rapidly degrades 13-mer to a 9-mer and then stops. Preferentially hydrolyzes the residue Leu and peptides with a hydrophobic C-terminus, while it has weak activity toward peptides with charged C-terminus. May play a role in the inactivation of peptide hormones. May be involved in the regulation of blood pressure through the inactivation of angiotensin II and/or the generation of bradykinin in the kidney. The protein is Endoplasmic reticulum aminopeptidase 1 (Erap1) of Rattus norvegicus (Rat).